A 119-amino-acid chain; its full sequence is Large ribosomal subunit protein bL20 (119 aa).

Belongs to the bacterial ribosomal protein bL20 family.

Binds directly to 23S ribosomal RNA and is necessary for the in vitro assembly process of the 50S ribosomal subunit. It is not involved in the protein synthesizing functions of that subunit. The polypeptide is Large ribosomal subunit protein bL20 (Polaromonas sp. (strain JS666 / ATCC BAA-500)).